A 172-amino-acid polypeptide reads, in one-letter code: Acetolactate synthase small subunit (172 aa).

The ACT domain occupies 4–78 (TLSVLVEDEA…NILKVDNITE (75 aa)).

It belongs to the acetolactate synthase small subunit family. In terms of assembly, dimer of large and small chains.

It is found in the plastid. It localises to the chloroplast. The enzyme catalyses 2 pyruvate + H(+) = (2S)-2-acetolactate + CO2. It functions in the pathway amino-acid biosynthesis; L-isoleucine biosynthesis; L-isoleucine from 2-oxobutanoate: step 1/4. The protein operates within amino-acid biosynthesis; L-valine biosynthesis; L-valine from pyruvate: step 1/4. This Cyanidium caldarium (Red alga) protein is Acetolactate synthase small subunit (ilvH).